Consider the following 192-residue polypeptide: Vascular endothelial growth factor A (192 aa).

The signal sequence occupies residues 1–26; sequence MNFLLSWIHWGLAALLYFHNAKVLQA. Cystine bridges form between Cys52–Cys94, Cys83–Cys128, and Cys87–Cys130. An N-linked (GlcNAc...) asparagine glycan is attached at Asn101.

This sequence belongs to the PDGF/VEGF growth factor family. Homodimer; disulfide-linked. Also found as heterodimer with PGF Interacts with FLT1/VEGFR1 and KDR/VEGFR2 receptors, heparan sulfate and heparin. In terms of tissue distribution, expressed by the venom gland, and probably other tissues.

The protein localises to the secreted. Functionally, growth factor active in angiogenesis, vasculogenesis and endothelial cell growth. Induces endothelial cell proliferation, promotes cell migration, inhibits apoptosis and induces permeabilization of blood vessels. The polypeptide is Vascular endothelial growth factor A (Vipera ammodytes ammodytes (Western sand viper)).